The sequence spans 247 residues: Putative ankyrin repeat protein RBE_1110 (247 aa).

ANK repeat units lie at residues Q105–Y135 and E139–T171.

The chain is Putative ankyrin repeat protein RBE_1110 from Rickettsia bellii (strain RML369-C).